The chain runs to 1142 residues: MAINGNSIPAIKDNTIGPWKLGETLGLGSTGKVQLARNGSTGQEAAVKVISKAVFNTGNVSGTSIVGSTTPDALPYGIEREIIIMKLLNHPNVLRLYDVWETNTDLYLVLEYAEKGELFNLLVERGPLPEHEAIRFFRQIIIGVSYCHALGIVHRDLKPENLLLDHKYNIKIADFGMAALETEGKLLETSCGSPHYAAPEIVSGIPYQGFASDVWSCGVILFALLTGRLPFDEEDGNIRTLLLKVQKGEFEMPSDDEISREAQDLIRKILTVDPERRIKTRDILKHPLLQKYPSIRDSKSIRGLPREDTYLTPLSESNSSIDATILQNLVILWHGRDPEGIKEKLREPGANAEKTLYALLYRFKCDTQKELIKQQQVKKRQSISSVSVSPSKKVSTTPQRRRNRESLISVTSSRKKPISFNKFTASSASSSNLTTPGSSKRLSKNFSSKKKLSTIVNQSSPTPASRNKRASVINVEKNQKRASIFSTTKKNKRSSRSIKRMSLIPSMKRESVTTKLMSTYAKLAEDDDWEYIEKETKRTSSNFATLIDEIFEYEKYEQIRKEKEELERKVREAKAREELERRRRKQEEKERARKLLEKEDLKRKQEELKKQIEIDISDLEQELSKHKEEKLDGNIRSISAPMENEEKNINHLEVDIDNILRRRNFSLQTRPVSRLDPGIMFSSPTEEVSPVEPKRTENERLTTEKKILETIRRSKFLGSSFNIDKELKLSKMEYPSIIAPQRLSEERVVSDSNDGYESLILPKDGNGVSQLKDSTATTAPVSDGRLRKISEIRVPQFTRKSRHFSESNKRLSVLSMYSTKESFTNLVDILKNGNLDVNNQQSQRIPTPRSADDSEFLFETVNEEAEYTGNSSNDERLYDVGDSTIKDKSALKLNFADRFNGSNEAKQTDNLHLPILPPLNGDNELRKQNSQEGDQAHPKIKSMIPESGSSSHTEKEEENEEKEEKKPEQHKQEEDQEKREKVVDDMEPPLNKSVQKIREKNAGSQAKDHSKDHLKEHKQDKNTAIGNGSFFRKFSKSSDKTMELYAKISAKQLFNGLEKLLRGWTQYGLKNIKSHPNNLTLTGKLSSDNIFSLRSTLFEVNIYPRGKMSVVQFKKVSGSFKAVKKLVNEVENVLNKEGVLQK.

The 271-residue stretch at 19 to 289 folds into the Protein kinase domain; that stretch reads WKLGETLGLG…TRDILKHPLL (271 aa). ATP is bound by residues 25 to 33 and Lys48; that span reads LGLGSTGKV. The active-site Proton acceptor is the Asp156. Disordered stretches follow at residues 378-412 and 425-469; these read KKRQ…SVTS and ASSA…RNKR. Positions 382 to 395 are enriched in low complexity; that stretch reads SISSVSVSPSKKVS. Ser406 is subject to Phosphoserine. Low complexity predominate over residues 425-440; the sequence is ASSASSSNLTTPGSSK. The span at 441-452 shows a compositional bias: basic residues; that stretch reads RLSKNFSSKKKL. A compositionally biased stretch (polar residues) spans 454–465; the sequence is TIVNQSSPTPAS. Phosphoserine is present on residues Ser465, Ser471, Ser617, Ser689, Ser719, Ser805, Ser807, and Ser883. Residues 676–698 are disordered; the sequence is DPGIMFSSPTEEVSPVEPKRTEN. Thr884 is modified (phosphothreonine). Residues 903-1031 are disordered; sequence NEAKQTDNLH…NTAIGNGSFF (129 aa). Composition is skewed to basic and acidic residues over residues 923–937, 962–984, and 996–1021; these read NELR…DQAH, KEEK…KVVD, and KIRE…KQDK. Phosphoserine is present on Ser930.

This sequence belongs to the protein kinase superfamily. CAMK Ser/Thr protein kinase family. NIM1 subfamily. As to quaternary structure, component of the GIN4 complex composed of at least BNI5, CDC3, CDC10, CDC11, CDC12, GIN4, NAP1 and SHS1 which forms a ring at the bud neck.

It is found in the cytoplasm. The protein localises to the bud neck. The enzyme catalyses L-seryl-[protein] + ATP = O-phospho-L-seryl-[protein] + ADP + H(+). It carries out the reaction L-threonyl-[protein] + ATP = O-phospho-L-threonyl-[protein] + ADP + H(+). Its function is as follows. Serine/threonine-protein kinase which regulates the localization and the function of the septins during mitosis. Phosphorylates SHS1. The protein is Serine/threonine-protein kinase GIN4 (GIN4) of Saccharomyces cerevisiae (strain ATCC 204508 / S288c) (Baker's yeast).